The primary structure comprises 626 residues: MHYPKVYDVIVIGGGHAGTEAALAAARMGRQTLLLTHNIETLGQMSCNPAIGGIGKSHLVREIDALGGAMALAADKGGIQFRILNSRKGAAVRATRAQADRVRYKAAIRETLENQANLDIFQQAADDLIVEGDTVKGVVTQMGIRFDAKTVVLTTGTFLGGVIHVGLEKSSGGRAGDPPSIALAQRLRELKLPVGRLKTGTPPRIDARSVDFSVMTPQPGDFPSPVMSFMGDVSMHPEQVNCYITHTNEKTHDIIRGGLDRSPMYTGVIEGVGPRYCPSIEDKIHRFSDKDSHQVFLEPEGLDTHELYPNGISTSLPFDVQFELVRSIRGMENAHILRPGYAIEYDYFNPQALKFTLETKAINGLYFAGQINGTTGYEEAGAQGLLAGLNAARRAWEQEEWTPKRDQAYMGVLVDDLITLGTKEPYRMFTSRAEYRLMLREDNADQRLTTIGRELGLVDDVRWAAYCEKMEAVERETSRLQHLWAAPNNPMGKKFVEMTGADLSKECSAIDLLKRPNINFGQIAELTGSEVSQQVGEQIEIAVKYEGYINRQHEDVAQLKRLEETKIPADFDYDVVSGLSREITQKLKTVRPETLAQASRIPGVTPAAVQLVMITIRKNNMTKKTA.

FAD is bound at residue 13–18 (GGGHAG). Residue 273 to 287 (GPRYCPSIEDKIHRF) participates in NAD(+) binding.

The protein belongs to the MnmG family. Homodimer. Heterotetramer of two MnmE and two MnmG subunits. FAD is required as a cofactor.

It localises to the cytoplasm. NAD-binding protein involved in the addition of a carboxymethylaminomethyl (cmnm) group at the wobble position (U34) of certain tRNAs, forming tRNA-cmnm(5)s(2)U34. This chain is tRNA uridine 5-carboxymethylaminomethyl modification enzyme MnmG, found in Acinetobacter baumannii (strain ACICU).